Consider the following 66-residue polypeptide: Large ribosomal subunit protein bL33c (66 aa).

Belongs to the bacterial ribosomal protein bL33 family.

It localises to the plastid. The protein localises to the chloroplast. The polypeptide is Large ribosomal subunit protein bL33c (Helianthus annuus (Common sunflower)).